The chain runs to 567 residues: MEVEMHGDVSKWEGYADWRNKAALRGRHGGMLAASFVLAVEILENLAFLANASNLVLYLKNFMHMSLARSSSEVTTFMATAFLLALLGGFLADAFFSTFVIFLISASIEFLGLILLTIQARRPSLMPPPCKSSAALRCEVVGGSKAAFLFVGLYLVSLGIGGIKGSLPSHGAEQFDEGTPKGRKQRSTFFNYYVFCLSCGALVAVTFVVWIEDNKGWEWGFGVSTISIFLSILVFLLGSRFYKNKIPRGSPLTTIFKVLLAASIVSCSSKTSSNHFTSREVQSEHEEKTPSQSLTNSLTCLNKAIEGKTHHIWLECTVQQVEDVKIVLKMLPIFGCTIMLNCCLAQLSTYSVHQAATMNRKIVNFNVPSASLPVFPVVFMLILAPTYDHLIIPFARKVTKSEIGITHLQRIGVGLVLSIVAMAVAALVELKRKQVAREAGLLDSEETLPITFLWIALQYLFLGSADLFTLAGLLEFFFTEAPSSMRSLATSLSWASLALGYYLSSVMVPIVNRVTKSAGQSPWLGEKLNRNRLDLFYWLMCVLSVVNFLHYLFWAKRYKYISTGSIS.

Helical transmembrane passes span 30-50 (GMLAASFVLAVEILENLAFLA), 70-92 (SSSEVTTFMATAFLLALLGGFLA), 99-118 (FVIFLISASIEFLGLILLTI), 147-167 (AFLFVGLYLVSLGIGGIKGSL), 189-209 (FFNYYVFCLSCGALVAVTFVV), 219-239 (WGFGVSTISIFLSILVFLLGS), 326-346 (IVLKMLPIFGCTIMLNCCLAQ), 374-394 (VFPVVFMLILAPTYDHLIIPF), 411-431 (IGVGLVLSIVAMAVAALVELK), 448-468 (LPITFLWIALQYLFLGSADLF), 491-511 (SLSWASLALGYYLSSVMVPIV), and 535-555 (LFYWLMCVLSVVNFLHYLFWA).

It belongs to the major facilitator superfamily. Proton-dependent oligopeptide transporter (POT/PTR) (TC 2.A.17) family. As to expression, expressed in flowers and siliques.

The protein localises to the membrane. Its function is as follows. Involved in abscisic acid transport. The sequence is that of Protein NRT1/ PTR FAMILY 4.5 (NPF4.5) from Arabidopsis thaliana (Mouse-ear cress).